The primary structure comprises 487 residues: Glutamate--tRNA ligase 2 (487 aa).

Positions 31–41 (PSPTGHLHVGG) match the 'HIGH' region motif. The short motif at 254–258 (PLSKR) is the 'KMSKS' region element. Residue Lys-257 participates in ATP binding.

This sequence belongs to the class-I aminoacyl-tRNA synthetase family. Glutamate--tRNA ligase type 1 subfamily. In terms of assembly, monomer.

It localises to the cytoplasm. The catalysed reaction is tRNA(Glu) + L-glutamate + ATP = L-glutamyl-tRNA(Glu) + AMP + diphosphate. In terms of biological role, catalyzes the attachment of glutamate to tRNA(Glu) in a two-step reaction: glutamate is first activated by ATP to form Glu-AMP and then transferred to the acceptor end of tRNA(Glu). In Thermotoga maritima (strain ATCC 43589 / DSM 3109 / JCM 10099 / NBRC 100826 / MSB8), this protein is Glutamate--tRNA ligase 2.